Reading from the N-terminus, the 281-residue chain is Probable catechol O-methyltransferase 2 (281 aa).

Positions 78, 100, 108, 127, 128, 156, and 183 each coordinate S-adenosyl-L-methionine. Aspartate 183 lines the Mg(2+) pocket. Lysine 186 is a substrate binding site. Mg(2+) is bound by residues aspartate 211 and asparagine 212. Substrate is bound at residue asparagine 212.

This sequence belongs to the class I-like SAM-binding methyltransferase superfamily. Cation-dependent O-methyltransferase family. Mg(2+) is required as a cofactor.

The protein localises to the vacuole. The enzyme catalyses a catechol + S-adenosyl-L-methionine = a guaiacol + S-adenosyl-L-homocysteine + H(+). The chain is Probable catechol O-methyltransferase 2 from Schizosaccharomyces pombe (strain 972 / ATCC 24843) (Fission yeast).